A 150-amino-acid chain; its full sequence is Large ribosomal subunit protein uL15 (150 aa).

Residues 1 to 13 are compositionally biased toward basic and acidic residues; that stretch reads MADNDAIKVHDLR. The disordered stretch occupies residues 1–44; it reads MADNDAIKVHDLRPAPGAKTAKTRVGRGEASKGKTAGRGTKGTK.

This sequence belongs to the universal ribosomal protein uL15 family. Part of the 50S ribosomal subunit.

Functionally, binds to the 23S rRNA. This chain is Large ribosomal subunit protein uL15, found in Micrococcus luteus (strain ATCC 4698 / DSM 20030 / JCM 1464 / CCM 169 / CCUG 5858 / IAM 1056 / NBRC 3333 / NCIMB 9278 / NCTC 2665 / VKM Ac-2230) (Micrococcus lysodeikticus).